We begin with the raw amino-acid sequence, 216 residues long: Protein Syd (216 aa).

This sequence belongs to the Syd family.

Its subcellular location is the cell inner membrane. Interacts with the SecY protein in vivo. May bind preferentially to an uncomplexed state of SecY, thus functioning either as a chelating agent for excess SecY in the cell or as a regulatory factor that negatively controls the translocase function. The protein is Protein Syd of Shewanella putrefaciens (strain CN-32 / ATCC BAA-453).